Consider the following 217-residue polypeptide: Ras-related protein Rab-39A (217 aa).

GTP-binding residues include serine 17, glycine 20, lysine 21, serine 22, cysteine 23, and threonine 44. Serine 22 contributes to the Mg(2+) binding site. The switch-I stretch occupies residues 39–47 (PACDPTVGV). The Mg(2+) site is built by threonine 44 and aspartate 68. 6 residues coordinate GTP: glycine 71, histidine 127, lysine 128, aspartate 130, alanine 158, and lysine 159. The tract at residues 71–87 (GQERFRSITRSYYRNSV) is switch-II. S-geranylgeranyl cysteine attachment occurs at residues cysteine 215 and cysteine 217. Cysteine 217 bears the Cysteine methyl ester mark.

The protein belongs to the small GTPase superfamily. Rab family. As to quaternary structure, interacts (GDP-bound) with C9orf72; C9orf72 acts as a GEF for RAB39A. Interacts (GTP-bound) with HOPS complex components VPS39 and VPS41, and STX17; interaction between HOPS components and RAB39A contributes to obtaining a functional HOPS complex that promotes membrane fusion driven by STX17-SNAP29-VAMP8. Interacts with BECN1. Probably associates with the PI3K (PI3KC3/PI3K-III/class III phosphatidylinositol 3-kinase) complex. Interacts with UACA. Interacts with isoform a of RASSF1. Does not interact with isoform c of RASSF1. The cofactor is Mg(2+). Post-translationally, prenylated. Prenylation is required for association with cellular membranes.

It is found in the cell membrane. Its subcellular location is the cytoplasmic vesicle. The protein resides in the phagosome membrane. The protein localises to the late endosome membrane. It localises to the lysosome membrane. It is found in the autolysosome membrane. It carries out the reaction GTP + H2O = GDP + phosphate + H(+). With respect to regulation, regulated by guanine nucleotide exchange factors (GEFs) including c9Orf72, which promote the exchange of bound GDP for free GTP. Regulated by GTPase activating proteins (GAPs) which increase the GTP hydrolysis activity. Inhibited by GDP dissociation inhibitors (GDIs). The small GTPases Rab are key regulators of intracellular membrane trafficking, from the formation of transport vesicles to their fusion with membranes. Rabs cycle between an inactive GDP-bound form and an active GTP-bound form that is able to recruit to membranes different sets of downstream effectors directly responsible for vesicle formation, movement, tethering and fusion. RAB39A regulates autophagosome-lysosome fusion via recruitment of the HOPS endosomal tethering complex onto lysosomes; this process involves lysosomal RAB39A and autophagosomal RAB2A recruitment of HOPS subcomplexes VPS41-VPS16-VPS18-VPS33A and VPS39-VPS11, respectively, which assemble into a functional complex to mediate membrane tethering and SNAREs-driven membrane fusion. Also negatively regulates lipopolysaccharide (LPS)-induced autophagosome formation in macrophages, possibly by implicating PI3K. Promotes the delivery of MHC-I molecules from the ER to phagosomes and the generation of peptide-loaded MHC-I complexes in phagosomes, thus enhancing antigen cross-presentation by dendritic cells. Plays a role in the maturation and acidification of phagosomes that engulf pathogens, such as S.aureus and M.tuberculosis. Plays a role in the fusion of phagosomes with lysosomes. May be involved in multiple neurite formation. In Mus musculus (Mouse), this protein is Ras-related protein Rab-39A.